Consider the following 78-residue polypeptide: uncharacterized protein (78 aa).

This is an uncharacterized protein from Escherichia coli O6:H1 (strain CFT073 / ATCC 700928 / UPEC).